The chain runs to 507 residues: tRNA(Ile)-lysidine synthase (507 aa).

Residue 24–29 (SGGGDS) coordinates ATP. Residues 370–500 (PPEEAHMAEA…KLLRDFFARL (131 aa)) enclose the CMP/dCMP-type deaminase domain. Positions 420, 445, and 448 each coordinate Zn(2+).

This sequence belongs to the tRNA(Ile)-lysidine synthase family.

The protein resides in the cytoplasm. The catalysed reaction is cytidine(34) in tRNA(Ile2) + L-lysine + ATP = lysidine(34) in tRNA(Ile2) + AMP + diphosphate + H(+). Ligates lysine onto the cytidine present at position 34 of the AUA codon-specific tRNA(Ile) that contains the anticodon CAU, in an ATP-dependent manner. Cytidine is converted to lysidine, thus changing the amino acid specificity of the tRNA from methionine to isoleucine. This chain is tRNA(Ile)-lysidine synthase (tilS), found in Thermus thermophilus (strain ATCC BAA-163 / DSM 7039 / HB27).